The sequence spans 159 residues: Transmembrane protein 42 (159 aa).

Transmembrane regions (helical) follow at residues 37–57, 59–79, 100–120, and 124–144; these read FWGVFNCLCAGAFGALAAASA, LAFGSEVSMGLCVLGIIVMAS, IASVTVTFSNILSSAFLGYVL, and CQEVLWWGGVFLILCGLTLIH.

The protein resides in the membrane. This is Transmembrane protein 42 (TMEM42) from Homo sapiens (Human).